Reading from the N-terminus, the 906-residue chain is Protein translocase subunit SecA (906 aa).

ATP contacts are provided by residues Gln-89, 107–111, and Asp-502; that span reads GEGKT. The segment at 829-898 is disordered; that stretch reads EAPPEPELPP…ACPCGSGKKY (70 aa). Over residues 858–877 the composition is skewed to basic and acidic residues; that stretch reads WSDHQHDERNVPAAERDPAD. 4 residues coordinate Zn(2+): Cys-890, Cys-892, Cys-901, and His-902.

It belongs to the SecA family. As to quaternary structure, monomer and homodimer. Part of the essential Sec protein translocation apparatus which comprises SecA, SecYEG and auxiliary proteins SecDF-YajC and YidC. Requires Zn(2+) as cofactor.

The protein resides in the cell inner membrane. The protein localises to the cytoplasm. It catalyses the reaction ATP + H2O + cellular proteinSide 1 = ADP + phosphate + cellular proteinSide 2.. In terms of biological role, part of the Sec protein translocase complex. Interacts with the SecYEG preprotein conducting channel. Has a central role in coupling the hydrolysis of ATP to the transfer of proteins into and across the cell membrane, serving both as a receptor for the preprotein-SecB complex and as an ATP-driven molecular motor driving the stepwise translocation of polypeptide chains across the membrane. In Brucella anthropi (strain ATCC 49188 / DSM 6882 / CCUG 24695 / JCM 21032 / LMG 3331 / NBRC 15819 / NCTC 12168 / Alc 37) (Ochrobactrum anthropi), this protein is Protein translocase subunit SecA.